Consider the following 657-residue polypeptide: MLFLCRASPLLQRTALSSPLRFFAPPKSSFNRTFANTAVRLSIEMETVDTSERLVQLRELMKRNNLDVYIVPSEDSHQSEYIAHCDARREFISGFTGSAGTAVISSTAAALSTDGRYFNQAAKQLDSNWTLLKRGLEGVPTWQEWTTEQAEGGKTVGVDPSVITAASARKLSETLEKSGSKLIGIEQNLVDQIWGDKRPARPNETVKIHPAEYAGKPFQEKIADLRKELKTKKRAGFIVSVLDEIAWLFNLRGNDIPYNPVFFSYAVITPETVDLYINDEKLSPEVKAHLGSDVVVKPYESIFADARALSVNAPLTENGSPMKYLTSNKASWALSLSFGGEKKLDEARSPISDAKAIKNEVELKGMRNCHIRDGAALSEYFAWLENELINKKSTLDEVDGADKLEQIRSKHDKFVGLSFDTISSTGPNAAVIHYKPEKGICSVIDPNAIYLCDSGGQYLDGTTDTTRTFHFGTPTEMEKKAFTLVLKGLIALDTAVFPKGTSGFALDALARQHLWRYGLDYLHGTGHGVGAYLNVHEGPIGVGTRIQYSEVSLSPGNVISDEPGYYEDGKFGIRIENIIMAREVETPYKFGEKSWLGFEHVTMTPIGQNLIETSLLSEEERQWVNNYHAEVWEKTSGYFKQDELTLNWLKKETKPLK.

Positions 453, 464, 562, and 576 each coordinate Mn(2+).

Belongs to the peptidase M24B family. The cofactor is Mn(2+).

The enzyme catalyses Release of any N-terminal amino acid, including proline, that is linked to proline, even from a dipeptide or tripeptide.. Catalyzes the removal of a penultimate prolyl residue from the N-termini of peptides. The sequence is that of Probable Xaa-Pro aminopeptidase P (ampp) from Talaromyces marneffei (strain ATCC 18224 / CBS 334.59 / QM 7333) (Penicillium marneffei).